Reading from the N-terminus, the 945-residue chain is Kinesin-like protein KIN-UA (945 aa).

The interval 1–54 (MAANGRASVRPVERHGAPPRPAGRSRSVAPPSRRPSPSPSRARPAAADNDGGSD) is disordered. Low complexity predominate over residues 22-31 (AGRSRSVAPP). One can recognise a Kinesin motor domain in the interval 57-399 (RVRVAVRLRP…IMFGQRAMKI (343 aa)). 142 to 149 (GQTGTGKT) is a binding site for ATP. The D-BOX motif lies at 369-377 (RTSLIVTIG). Residues 415–644 (YKKVEHEVDH…ILRLKQSLAD (230 aa)) are a coiled coil. ARM repeat units lie at residues 683 to 722 (RSNI…NLAA), 724 to 764 (DVNQ…NLAM), 766 to 806 (GSNQ…NLCG), and 808 to 847 (EKLH…NFAK).

This sequence belongs to the TRAFAC class myosin-kinesin ATPase superfamily. Kinesin family. Ungrouped subfamily.

It localises to the cytoplasm. Its subcellular location is the cytoskeleton. The sequence is that of Kinesin-like protein KIN-UA from Oryza sativa subsp. japonica (Rice).